The chain runs to 730 residues: Matrix metalloproteinase-9 (730 aa).

Residues 1–19 form the signal peptide; sequence MSPWQPLLLALLAFGCSSA. Positions 20-107 are cleaved as a propeptide — activation peptide; it reads APYQRQPTFV…PRCGVPDVGR (88 aa). An N-linked (GlcNAc...) asparagine glycan is attached at Asn39. The Cysteine switch motif lies at 98–105; it reads PRCGVPDV. Cys100 lines the Zn(2+) pocket. 2 N-linked (GlcNAc...) asparagine glycosylation sites follow: Asn120 and Asn127. Positions 131 and 165 each coordinate Ca(2+). Residues His175 and Asp177 each coordinate Zn(2+). Ca(2+) contacts are provided by Asp182, Gly183, Asp185, and Leu187. Zn(2+) is bound at residue His190. Ca(2+) is bound by residues Gly197, Gln199, and Asp201. Residue His203 participates in Zn(2+) binding. Ca(2+)-binding residues include Asp205, Asp206, and Glu208. 3 Fibronectin type-II domains span residues 225–273, 283–331, and 342–390; these read SNGA…FCPS, GEGK…FCPT, and SAGE…FCPD. 6 disulfide bridges follow: Cys230–Cys256, Cys244–Cys271, Cys288–Cys314, Cys302–Cys329, Cys347–Cys373, and Cys361–Cys388. His401 contributes to the Zn(2+) binding site. Residue Glu402 is part of the active site. Zn(2+) contacts are provided by His405 and His411. Positions 442–529 are disordered; it reads LYGRGSKPDP…SEASTESLSP (88 aa). Residues 463–477 show a composition bias toward pro residues; the sequence is PTAPPTMCPTIPPTA. The segment covering 478–489 has biased composition (low complexity); that stretch reads YPTVGPTVGPTG. Over residues 490 to 514 the composition is skewed to pro residues; sequence APSPGPTSSPSPGPTGAPSPGPTAP. A disulfide bridge connects residues Cys534 and Cys729. Hemopexin repeat units lie at residues 536 to 581, 582 to 626, 628 to 675, and 676 to 729; these read VDVF…WPAL, PATL…GLGP, VTHV…FSGV, and PWNS…LLQC.

This sequence belongs to the peptidase M10A family. As to quaternary structure, exists as monomer or homodimer; disulfide-linked. Also exists as heterodimer with LCN2. Macrophages and transformed cell lines produce only the monomeric form. Interacts with ECM1. Requires Zn(2+) as cofactor. Ca(2+) serves as cofactor. In terms of processing, N- and O-glycosylated.

The protein localises to the secreted. It is found in the extracellular space. The protein resides in the extracellular matrix. The catalysed reaction is Cleavage of gelatin types I and V and collagen types IV and V.. With respect to regulation, inhibited by histatin-3 1/24 (histatin-5). Inhibited by ECM1. Matrix metalloproteinase that plays an essential role in local proteolysis of the extracellular matrix and in leukocyte migration. Could play a role in bone osteoclastic resorption. Cleaves KiSS1 at a Gly-|-Leu bond. Cleaves NINJ1 to generate the Secreted ninjurin-1 form. Cleaves type IV and type V collagen into large C-terminal three quarter fragments and shorter N-terminal one quarter fragments. Degrades fibronectin but not laminin or Pz-peptide. The protein is Matrix metalloproteinase-9 (Mmp9) of Mus musculus (Mouse).